A 231-amino-acid polypeptide reads, in one-letter code: Large ribosomal subunit protein uL1 (231 aa).

It belongs to the universal ribosomal protein uL1 family. As to quaternary structure, part of the 50S ribosomal subunit.

Binds directly to 23S rRNA. The L1 stalk is quite mobile in the ribosome, and is involved in E site tRNA release. Its function is as follows. Protein L1 is also a translational repressor protein, it controls the translation of the L11 operon by binding to its mRNA. The protein is Large ribosomal subunit protein uL1 of Saccharophagus degradans (strain 2-40 / ATCC 43961 / DSM 17024).